The following is a 422-amino-acid chain: Acetyl-CoA acetyltransferase, mitochondrial (422 aa).

The N-terminal 28 residues, 1-28 (MPVLAALLRRGPLLQRRVQEIRYAERSY), are a transit peptide targeting the mitochondrion. Position 61 is an N6-acetyllysine; alternate (Lys61). An N6-succinyllysine; alternate modification is found at Lys61. Lys73 is subject to N6-succinyllysine. Cys121 serves as the catalytic Acyl-thioester intermediate. Lys169, Lys176, Lys185, and Lys197 each carry N6-acetyllysine; alternate. 4 positions are modified to N6-succinyllysine; alternate: Lys169, Lys176, Lys185, and Lys197. Tyr214 contacts CoA. A K(+)-binding site is contributed by Tyr214. Lys218 carries the post-translational modification N6-acetyllysine; alternate. N6-succinyllysine; alternate is present on Lys218. An N6-succinyllysine modification is found at Lys238. N6-acetyllysine; alternate is present on Lys240. Lys240 carries the post-translational modification N6-succinyllysine; alternate. An N6-acetyllysine mark is found at Lys246 and Lys252. CoA-binding positions include 253–255 (RVD) and Lys258. At Lys258 the chain carries N6-acetyllysine; alternate. Lys258 is subject to N6-succinyllysine; alternate. An N6-succinyllysine mark is found at Lys261 and Lys263. Ala275, Ala276, and Ala278 together coordinate K(+). Ser279 provides a ligand contact to CoA. An N6-acetyllysine modification is found at Lys333. Val376 contributes to the K(+) binding site. The Proton donor/acceptor role is filled by Cys408.

Belongs to the thiolase-like superfamily. Thiolase family. As to quaternary structure, homotetramer. Succinylation at Lys-263, adjacent to a coenzyme A binding site. Desuccinylated by SIRT5.

Its subcellular location is the mitochondrion. The enzyme catalyses 2 acetyl-CoA = acetoacetyl-CoA + CoA. It carries out the reaction propanoyl-CoA + acetyl-CoA = 2-methyl-3-oxobutanoyl-CoA + CoA. It participates in lipid metabolism; fatty acid beta-oxidation. With respect to regulation, activated by potassium ions, but not sodium ions. This is one of the enzymes that catalyzes the last step of the mitochondrial beta-oxidation pathway, an aerobic process breaking down fatty acids into acetyl-CoA. Using free coenzyme A/CoA, catalyzes the thiolytic cleavage of medium- to long-chain 3-oxoacyl-CoAs into acetyl-CoA and a fatty acyl-CoA shortened by two carbon atoms. The activity of the enzyme is reversible and it can also catalyze the condensation of two acetyl-CoA molecules into acetoacetyl-CoA. Thereby, it plays a major role in ketone body metabolism. The chain is Acetyl-CoA acetyltransferase, mitochondrial (ACAT1) from Bos taurus (Bovine).